The chain runs to 115 residues: T cell receptor beta variable 16 (115 aa).

Positions M1–G20 are cleaved as a signal peptide. Positions E21 to Q115 constitute an Ig-like domain. A disulfide bridge connects residues C42 and C111.

As to quaternary structure, alpha-beta TR is a heterodimer composed of an alpha and beta chain; disulfide-linked. The alpha-beta TR is associated with the transmembrane signaling CD3 coreceptor proteins to form the TR-CD3 (TcR or TCR). The assembly of alpha-beta TR heterodimers with CD3 occurs in the endoplasmic reticulum where a single alpha-beta TR heterodimer associates with one CD3D-CD3E heterodimer, one CD3G-CD3E heterodimer and one CD247 homodimer forming a stable octameric structure. CD3D-CD3E and CD3G-CD3E heterodimers preferentially associate with TR alpha and TR beta chains, respectively. The association of the CD247 homodimer is the last step of TcR assembly in the endoplasmic reticulum and is required for transport to the cell surface.

It is found in the cell membrane. In terms of biological role, v region of the variable domain of T cell receptor (TR) beta chain that participates in the antigen recognition. Alpha-beta T cell receptors are antigen specific receptors which are essential to the immune response and are present on the cell surface of T lymphocytes. Recognize peptide-major histocompatibility (MH) (pMH) complexes that are displayed by antigen presenting cells (APC), a prerequisite for efficient T cell adaptive immunity against pathogens. Binding of alpha-beta TR to pMH complex initiates TR-CD3 clustering on the cell surface and intracellular activation of LCK that phosphorylates the ITAM motifs of CD3G, CD3D, CD3E and CD247 enabling the recruitment of ZAP70. In turn ZAP70 phosphorylates LAT, which recruits numerous signaling molecules to form the LAT signalosome. The LAT signalosome propagates signal branching to three major signaling pathways, the calcium, the mitogen-activated protein kinase (MAPK) kinase and the nuclear factor NF-kappa-B (NF-kB) pathways, leading to the mobilization of transcription factors that are critical for gene expression and essential for T cell growth and differentiation. The T cell repertoire is generated in the thymus, by V-(D)-J rearrangement. This repertoire is then shaped by intrathymic selection events to generate a peripheral T cell pool of self-MH restricted, non-autoaggressive T cells. Post-thymic interaction of alpha-beta TR with the pMH complexes shapes TR structural and functional avidity. In Homo sapiens (Human), this protein is T cell receptor beta variable 16.